A 336-amino-acid polypeptide reads, in one-letter code: Galactose/methyl galactoside import permease protein MglC (336 aa).

The next 8 membrane-spanning stretches (helical) occupy residues 17-37 (AIYFVLLILLGIIIAQDPTFL), 53-73 (LIIALGVAGLLITQGTDLSAG), 107-127 (VVILAVCAIGAVIGLVNGLVI), 128-148 (AYLNVTPFIATMGTMIIIYGF), 181-201 (FKLSYITIYAAIAALLVWIMW), 231-251 (LVAIYMIAGMFYAFGGMLEAG), 257-277 (TNNLGFMYELDAIAACVVGGV), and 306-326 (IGVNPYWQYIIKGSIIILAVA).

The protein belongs to the binding-protein-dependent transport system permease family. AraH/RbsC subfamily. In terms of assembly, the complex is composed of one ATP-binding protein (MglA), two transmembrane proteins (MglC) and a solute-binding protein (MglB).

The protein resides in the cell inner membrane. Its function is as follows. Part of the ABC transporter complex MglABC involved in galactose/methyl galactoside import. Probably responsible for the translocation of the substrate across the membrane. In Haemophilus influenzae (strain ATCC 51907 / DSM 11121 / KW20 / Rd), this protein is Galactose/methyl galactoside import permease protein MglC (mglC).